The following is a 388-amino-acid chain: Alpha-2B adrenergic receptor (388 aa).

The chain crosses the membrane as a helical span at residues 1-25; that stretch reads AIAAVITFLILFTIFGNALVILAVL. At 26-36 the chain is on the cytoplasmic side; it reads TSRSLRAPQNL. Residues 37–62 form a helical membrane-spanning segment; that stretch reads FLVSLAAADILVATLIIPFSLANELL. The Extracellular segment spans residues 63–72; it reads GYWYFRRTWC. A disulfide bridge connects residues C72 and C151. Residues 73 to 95 traverse the membrane as a helical segment; sequence EVYLALDVLFCTSSIVHLCAISL. Residues 96-117 are Cytoplasmic-facing; it reads DRYWAVSRALEYNSKRTPRXIK. A helical transmembrane segment spans residues 118–140; sequence CIILTVWLIAAAISLPPLIYKGD. Over 141–156 the chain is Extracellular; that stretch reads QGPQPRGRPQCKLNQE. Residues 157-180 traverse the membrane as a helical segment; the sequence is AWYILSSSIGSFFAPCLIMILVYL. At 181-352 the chain is on the cytoplasmic side; it reads RIYVIAKRSN…LTREKRFTFV (172 aa). Residues 193–309 form a disordered region; that stretch reads GPRAKGASRE…ASACNPPLQQ (117 aa). The span at 239–249 shows a compositional bias: basic and acidic residues; sequence PTGEKEGKTPE. A compositionally biased stretch (acidic residues) spans 279–291; sequence PEEEAEEEEEECE. A compositionally biased stretch (low complexity) spans 292-302; the sequence is PQAAPASSASA. The helical transmembrane segment at 353-376 threads the bilayer; that stretch reads LAVVIGVFVLCWFPFFFSYSLGAI. Residues 377-385 lie on the Extracellular side of the membrane; the sequence is CPQRCKVPH. Residues 386-388 form a helical membrane-spanning segment; sequence GLF.

This sequence belongs to the G-protein coupled receptor 1 family. Adrenergic receptor subfamily. ADRA2B sub-subfamily. As to quaternary structure, interacts with RAB26. Interacts with PPP1R9B.

The protein resides in the cell membrane. Alpha-2 adrenergic receptors mediate the catecholamine-induced inhibition of adenylate cyclase through the action of G proteins. This Orycteropus afer (Aardvark) protein is Alpha-2B adrenergic receptor (ADRA2B).